The chain runs to 268 residues: Glucosamine-6-phosphate deaminase (268 aa).

Asp72 (proton acceptor; for enolization step) is an active-site residue. Residue Asp141 is the For ring-opening step of the active site. His143 serves as the catalytic Proton acceptor; for ring-opening step. The active-site For ring-opening step is Glu148.

This sequence belongs to the glucosamine/galactosamine-6-phosphate isomerase family. NagB subfamily. In terms of assembly, homohexamer.

It catalyses the reaction alpha-D-glucosamine 6-phosphate + H2O = beta-D-fructose 6-phosphate + NH4(+). It functions in the pathway amino-sugar metabolism; N-acetylneuraminate degradation; D-fructose 6-phosphate from N-acetylneuraminate: step 5/5. Its activity is regulated as follows. Allosterically activated by N-acetylglucosamine 6-phosphate (GlcNAc6P). Catalyzes the reversible isomerization-deamination of glucosamine 6-phosphate (GlcN6P) to form fructose 6-phosphate (Fru6P) and ammonium ion. The polypeptide is Glucosamine-6-phosphate deaminase (Histophilus somni (strain 2336) (Haemophilus somnus)).